A 337-amino-acid polypeptide reads, in one-letter code: Ketol-acid reductoisomerase (NADP(+)) (337 aa).

The KARI N-terminal Rossmann domain maps to isoleucine 3 to threonine 183. NADP(+)-binding positions include tyrosine 26–glutamine 29, arginine 49, serine 52, serine 54, and aspartate 84–glutamine 87. Histidine 109 is an active-site residue. NADP(+) is bound at residue glycine 135. The KARI C-terminal knotted domain maps to threonine 184–valine 329. The Mg(2+) site is built by aspartate 192, glutamate 196, glutamate 228, and glutamate 232. Serine 253 lines the substrate pocket.

It belongs to the ketol-acid reductoisomerase family. Requires Mg(2+) as cofactor.

It catalyses the reaction (2R)-2,3-dihydroxy-3-methylbutanoate + NADP(+) = (2S)-2-acetolactate + NADPH + H(+). The enzyme catalyses (2R,3R)-2,3-dihydroxy-3-methylpentanoate + NADP(+) = (S)-2-ethyl-2-hydroxy-3-oxobutanoate + NADPH + H(+). Its pathway is amino-acid biosynthesis; L-isoleucine biosynthesis; L-isoleucine from 2-oxobutanoate: step 2/4. The protein operates within amino-acid biosynthesis; L-valine biosynthesis; L-valine from pyruvate: step 2/4. Involved in the biosynthesis of branched-chain amino acids (BCAA). Catalyzes an alkyl-migration followed by a ketol-acid reduction of (S)-2-acetolactate (S2AL) to yield (R)-2,3-dihydroxy-isovalerate. In the isomerase reaction, S2AL is rearranged via a Mg-dependent methyl migration to produce 3-hydroxy-3-methyl-2-ketobutyrate (HMKB). In the reductase reaction, this 2-ketoacid undergoes a metal-dependent reduction by NADPH to yield (R)-2,3-dihydroxy-isovalerate. The chain is Ketol-acid reductoisomerase (NADP(+)) from Corynebacterium efficiens (strain DSM 44549 / YS-314 / AJ 12310 / JCM 11189 / NBRC 100395).